The chain runs to 291 residues: N-acetylmannosamine kinase (291 aa).

Residues 5-12 (AIDIGGTK) and 132-139 (GVGGGVVC) each bind ATP. 4 residues coordinate Zn(2+): His-156, Cys-166, Cys-168, and Cys-173.

This sequence belongs to the ROK (NagC/XylR) family. NanK subfamily. Homodimer.

The catalysed reaction is an N-acyl-D-mannosamine + ATP = an N-acyl-D-mannosamine 6-phosphate + ADP + H(+). Its pathway is amino-sugar metabolism; N-acetylneuraminate degradation; D-fructose 6-phosphate from N-acetylneuraminate: step 2/5. Functionally, catalyzes the phosphorylation of N-acetylmannosamine (ManNAc) to ManNAc-6-P. The chain is N-acetylmannosamine kinase from Salmonella arizonae (strain ATCC BAA-731 / CDC346-86 / RSK2980).